A 258-amino-acid chain; its full sequence is Cytochrome c oxidase subunit 2 (258 aa).

The Mitochondrial intermembrane segment spans residues 1-41 (MIVNECLFFTIALCDAAEPWQLGFQDAATPMMQGIIDLHHD). A helical transmembrane segment spans residues 42–58 (ILFFLILILVFVLWILV). The Mitochondrial matrix portion of the chain corresponds to 59–82 (RALWHFYYKKNPIPQRIVHGTTIE). Residues 83 to 104 (ILWTIFPSIILMFIAIPSFALL) traverse the membrane as a helical segment. Residues 105–258 (YSMDEVVVDP…VSNLFIPPTS (154 aa)) are Mitochondrial intermembrane-facing. Positions 187, 222, 224, 226, 230, and 233 each coordinate Cu cation. Glu-224 is a binding site for Mg(2+).

It belongs to the cytochrome c oxidase subunit 2 family. As to quaternary structure, component of the cytochrome c oxidase (complex IV, CIV), a multisubunit enzyme composed of a catalytic core of 3 subunits and several supernumerary subunits. The complex exists as a monomer or a dimer and forms supercomplexes (SCs) in the inner mitochondrial membrane with ubiquinol-cytochrome c oxidoreductase (cytochrome b-c1 complex, complex III, CIII). Requires Cu cation as cofactor.

The protein localises to the mitochondrion inner membrane. The catalysed reaction is 4 Fe(II)-[cytochrome c] + O2 + 8 H(+)(in) = 4 Fe(III)-[cytochrome c] + 2 H2O + 4 H(+)(out). Functionally, component of the cytochrome c oxidase, the last enzyme in the mitochondrial electron transport chain which drives oxidative phosphorylation. The respiratory chain contains 3 multisubunit complexes succinate dehydrogenase (complex II, CII), ubiquinol-cytochrome c oxidoreductase (cytochrome b-c1 complex, complex III, CIII) and cytochrome c oxidase (complex IV, CIV), that cooperate to transfer electrons derived from NADH and succinate to molecular oxygen, creating an electrochemical gradient over the inner membrane that drives transmembrane transport and the ATP synthase. Cytochrome c oxidase is the component of the respiratory chain that catalyzes the reduction of oxygen to water. Electrons originating from reduced cytochrome c in the intermembrane space (IMS) are transferred via the dinuclear copper A center (CU(A)) of subunit 2 and heme A of subunit 1 to the active site in subunit 1, a binuclear center (BNC) formed by heme A3 and copper B (CU(B)). The BNC reduces molecular oxygen to 2 water molecules using 4 electrons from cytochrome c in the IMS and 4 protons from the mitochondrial matrix. The protein is Cytochrome c oxidase subunit 2 (COX2) of Oenothera berteroana (Bertero's evening primrose).